A 1007-amino-acid polypeptide reads, in one-letter code: Glutamate receptor ionotropic, delta-2 (1007 aa).

Residues 1-23 (MEVFPLLFFLSFWWSRTWDLATS) form the signal peptide. An interaction with CBLN1 homotrimer region spans residues 24-345 (DSIIHIGAIF…NAFHKKLEDR (322 aa)). The Extracellular segment spans residues 24-566 (DSIIHIGAIF…DMFACLAPFD (543 aa)). Cystine bridges form between Cys-83-Cys-355, Cys-99-Cys-131, and Cys-298-Cys-310. Asn-293 carries N-linked (GlcNAc...) asparagine glycosylation. A glycan (N-linked (GlcNAc...) asparagine) is linked at Asn-426. Residues 567-587 (LSLWACIAGTVLLVGLLVYLL) traverse the membrane as a helical segment. Residues 588-635 (NWLNPPRLQMGSMTSTTLYNSMWFVYGSFVQQGGEVPYTTLATRMMMG) lie on the Cytoplasmic side of the membrane. A helical transmembrane segment spans residues 636–656 (AWWLFALIVISSYTANLAAFL). At 657–830 (TITRIESSIQ…QKGGALDIKS (174 aa)) the chain is on the extracellular side. 2 N-linked (GlcNAc...) asparagine glycosylation sites follow: Asn-713 and Asn-716. The chain crosses the membrane as a helical span at residues 831 to 851 (LAGVFCILAAGIVLSCLIAVL). The Cytoplasmic segment spans residues 852 to 1007 (ETWWSRRKGS…GNDPDRGTSI (156 aa)). Residue Ser-883 is modified to Phosphoserine. Thr-886 carries the phosphothreonine modification. Ser-890 bears the Phosphoserine mark. The interval 921–991 (DFRNTHITTT…MSSIPYQPTP (71 aa)) is interaction with AP4M1. A PDZ-binding motif is present at residues 1005-1007 (TSI). A Phosphoserine modification is found at Ser-1006.

This sequence belongs to the glutamate-gated ion channel (TC 1.A.10.1) family. GRID2 subfamily. Tetramer; dimer of dimers. Interacts with AP4M1. Interacts with EML2. Interacts with MAGI2 (via PDZ domains). Interacts with BECN1, GOPC, GRID2IP, SHANK1 and SHANK2. Interacts with CBLN2, but not with CBLN4. Interacts with CBLN1 (via C1q domain); the interaction is CBLN1-NRX1 complex formation-dependent; CBLN1-binding is calcium-independent; CBLN1 hexamers anchor GRID2 N-terminal domain dimers to monomeric NRXN1 isoform beta; promotes synaptogenesis and mediates the D-Serine-dependent long term depression signals and AMPA receptor endocytosis. In terms of tissue distribution, expressed at high levels in the cerebellar Purkinje cell layer, almost absent in the forebrain.

It localises to the postsynaptic cell membrane. It carries out the reaction Ca(2+)(in) = Ca(2+)(out). It catalyses the reaction Na(+)(in) = Na(+)(out). In terms of biological role, member of the ionotropic glutamate receptor family, which plays a crucial role in synaptic organization and signal transduction in the central nervous system. Although it shares structural features with ionotropic glutamate receptors, does not bind glutamate as a primary ligand. Promotes synaptogenesis and mediates the D-Serine-dependent long term depression signals and AMPA receptor endocytosis of cerebellar parallel fiber-Purkinje cell (PF-PC) synapses through the NRX1B-CBLN1-GRID2 triad complex. In the presence of neurexins and cerebellins, forms cation-selective channels that are proposed to be gated by glycine and D-serine. However, recent research disputes this ligand-gated cation channel activity. Cation-selective ion channel activity can be triggered by GRM1 in Purkinje cells. The sequence is that of Glutamate receptor ionotropic, delta-2 (Grid2) from Rattus norvegicus (Rat).